The sequence spans 193 residues: Immunogenic protein MPB70 (193 aa).

A signal peptide spans 1-30 (MKVKNTIAATSFAAAGLAALAVAVSPPAAA). Positions 57-189 (QDPVAVAASN…ATVYMIDSVL (133 aa)) constitute an FAS1 domain.

In terms of assembly, generally found as a monomer; homodimer in culture fluids.

Its subcellular location is the secreted. The polypeptide is Immunogenic protein MPB70 (mpb70) (Mycobacterium bovis (strain ATCC BAA-935 / AF2122/97)).